The sequence spans 419 residues: UDP-N-acetylglucosamine 1-carboxyvinyltransferase (419 aa).

Position 22 to 23 (22 to 23 (KN)) interacts with phosphoenolpyruvate. Residue Arg92 coordinates UDP-N-acetyl-alpha-D-glucosamine. The active-site Proton donor is Cys116. Cys116 carries the 2-(S-cysteinyl)pyruvic acid O-phosphothioketal modification. Residues 121-125 (RPIDQ), Asp305, and Ile327 each bind UDP-N-acetyl-alpha-D-glucosamine.

It belongs to the EPSP synthase family. MurA subfamily.

It is found in the cytoplasm. It catalyses the reaction phosphoenolpyruvate + UDP-N-acetyl-alpha-D-glucosamine = UDP-N-acetyl-3-O-(1-carboxyvinyl)-alpha-D-glucosamine + phosphate. It functions in the pathway cell wall biogenesis; peptidoglycan biosynthesis. Its function is as follows. Cell wall formation. Adds enolpyruvyl to UDP-N-acetylglucosamine. The sequence is that of UDP-N-acetylglucosamine 1-carboxyvinyltransferase from Trichlorobacter lovleyi (strain ATCC BAA-1151 / DSM 17278 / SZ) (Geobacter lovleyi).